Here is a 403-residue protein sequence, read N- to C-terminus: S-adenosylmethionine synthase (403 aa).

An ATP-binding site is contributed by His-16. A Mg(2+)-binding site is contributed by Asp-18. Position 44 (Glu-44) interacts with K(+). The L-methionine site is built by Glu-57 and Gln-110. Positions 110 to 120 are flexible loop; sequence QSAHIAQGVDA. Residues 175–177, Asp-253, 259–260, Ala-276, and Lys-280 contribute to the ATP site; these read DSK and RK. Asp-253 is a binding site for L-methionine. Lys-284 is an L-methionine binding site.

The protein belongs to the AdoMet synthase family. As to quaternary structure, homotetramer; dimer of dimers. The cofactor is Mg(2+). K(+) is required as a cofactor.

The protein localises to the cytoplasm. The catalysed reaction is L-methionine + ATP + H2O = S-adenosyl-L-methionine + phosphate + diphosphate. It participates in amino-acid biosynthesis; S-adenosyl-L-methionine biosynthesis; S-adenosyl-L-methionine from L-methionine: step 1/1. Functionally, catalyzes the formation of S-adenosylmethionine (AdoMet) from methionine and ATP. The overall synthetic reaction is composed of two sequential steps, AdoMet formation and the subsequent tripolyphosphate hydrolysis which occurs prior to release of AdoMet from the enzyme. The sequence is that of S-adenosylmethionine synthase from Erythrobacter litoralis (strain HTCC2594).